The primary structure comprises 612 residues: 2-isopropylmalate synthase B (612 aa).

One can recognise a Pyruvate carboxyltransferase domain in the interval 71–344; that stretch reads VRIFDTTLRD…YTGINTQHIL (274 aa). 3 residues coordinate a divalent metal cation: Asp80, His277, and Asn313.

The protein belongs to the alpha-IPM synthase/homocitrate synthase family. LeuA type 1 subfamily. Homodimer. Requires a divalent metal cation as cofactor.

The enzyme catalyses 3-methyl-2-oxobutanoate + acetyl-CoA + H2O = (2S)-2-isopropylmalate + CoA + H(+). It functions in the pathway amino-acid biosynthesis; L-leucine biosynthesis; L-leucine from 3-methyl-2-oxobutanoate: step 1/4. Functionally, catalyzes the condensation of the acetyl group of acetyl-CoA with 3-methyl-2-oxobutanoate (2-oxoisovalerate) to form 3-carboxy-3-hydroxy-4-methylpentanoate (2-isopropylmalate). This chain is 2-isopropylmalate synthase B (IPMSB), found in Solanum pennellii (Tomato).